The sequence spans 29 residues: uncharacterized protein (29 aa).

The disordered stretch occupies residues 1–29 (MFKMKFGDTLPRSDFGTGGNKQAPGLELG).

This is an uncharacterized protein from Saccharomyces cerevisiae (strain ATCC 204508 / S288c) (Baker's yeast).